Here is a 343-residue protein sequence, read N- to C-terminus: Large ribosomal subunit protein uL3 (343 aa).

Disordered stretches follow at residues 1 to 31 (MGHR…TPRS) and 238 to 262 (KGSR…PGQM).

The protein belongs to the universal ribosomal protein uL3 family. In terms of assembly, part of the 50S ribosomal subunit. Forms a cluster with proteins L14 and L24e.

One of the primary rRNA binding proteins, it binds directly near the 3'-end of the 23S rRNA, where it nucleates assembly of the 50S subunit. The chain is Large ribosomal subunit protein uL3 from Sulfurisphaera tokodaii (strain DSM 16993 / JCM 10545 / NBRC 100140 / 7) (Sulfolobus tokodaii).